The sequence spans 229 residues: Cytochrome c oxidase subunit 2 (229 aa).

At 1-14 (MAQQAQLGLQDAAS) the chain is on the mitochondrial intermembrane side. A helical membrane pass occupies residues 15–45 (PIMEELIHFHDHTLTVVFLISVLIFYLIIVM). At 46 to 59 (VTTTFMNKHSLDSQ) the chain is on the mitochondrial matrix side. Residues 60–87 (EVEIVWTVMPAIVLITIALPSLRILYLT) traverse the membrane as a helical segment. The Mitochondrial intermembrane segment spans residues 88–229 (DEISNPHLTI…ENWTTKVLAS (142 aa)). His161, Cys196, Glu198, Cys200, His204, and Met207 together coordinate Cu cation. Glu198 is a Mg(2+) binding site.

The protein belongs to the cytochrome c oxidase subunit 2 family. As to quaternary structure, component of the cytochrome c oxidase (complex IV, CIV), a multisubunit enzyme composed of 14 subunits. The complex is composed of a catalytic core of 3 subunits MT-CO1, MT-CO2 and MT-CO3, encoded in the mitochondrial DNA, and 11 supernumerary subunits COX4I, COX5A, COX5B, COX6A, COX6B, COX6C, COX7A, COX7B, COX7C, COX8 and NDUFA4, which are encoded in the nuclear genome. The complex exists as a monomer or a dimer and forms supercomplexes (SCs) in the inner mitochondrial membrane with NADH-ubiquinone oxidoreductase (complex I, CI) and ubiquinol-cytochrome c oxidoreductase (cytochrome b-c1 complex, complex III, CIII), resulting in different assemblies (supercomplex SCI(1)III(2)IV(1) and megacomplex MCI(2)III(2)IV(2)). Found in a complex with TMEM177, COA6, COX18, COX20, SCO1 and SCO2. Interacts with TMEM177 in a COX20-dependent manner. Interacts with COX20. Interacts with COX16. The cofactor is Cu cation.

It localises to the mitochondrion inner membrane. It catalyses the reaction 4 Fe(II)-[cytochrome c] + O2 + 8 H(+)(in) = 4 Fe(III)-[cytochrome c] + 2 H2O + 4 H(+)(out). Functionally, component of the cytochrome c oxidase, the last enzyme in the mitochondrial electron transport chain which drives oxidative phosphorylation. The respiratory chain contains 3 multisubunit complexes succinate dehydrogenase (complex II, CII), ubiquinol-cytochrome c oxidoreductase (cytochrome b-c1 complex, complex III, CIII) and cytochrome c oxidase (complex IV, CIV), that cooperate to transfer electrons derived from NADH and succinate to molecular oxygen, creating an electrochemical gradient over the inner membrane that drives transmembrane transport and the ATP synthase. Cytochrome c oxidase is the component of the respiratory chain that catalyzes the reduction of oxygen to water. Electrons originating from reduced cytochrome c in the intermembrane space (IMS) are transferred via the dinuclear copper A center (CU(A)) of subunit 2 and heme A of subunit 1 to the active site in subunit 1, a binuclear center (BNC) formed by heme A3 and copper B (CU(B)). The BNC reduces molecular oxygen to 2 water molecules using 4 electrons from cytochrome c in the IMS and 4 protons from the mitochondrial matrix. The chain is Cytochrome c oxidase subunit 2 (MT-CO2) from Petromyzon marinus (Sea lamprey).